Here is a 537-residue protein sequence, read N- to C-terminus: Cytoplasmic 60S subunit biogenesis factor REI1 homolog (537 aa).

C2H2-type zinc fingers lie at residues 18–42 and 83–107; these read YTCN…SDWH and KTCE…STKH. Disordered stretches follow at residues 101–151 and 163–204; these read HLSS…AEEE and SIHD…PEAL. Residues 192 to 204 are compositionally biased toward low complexity; sequence EETPTTTPKPEAL. The segment at 260 to 284 adopts a C2H2-type 3 zinc-finger fold; that stretch reads NECLTCGKMKVNVFAIQTHMRDKSH. Acidic residues predominate over residues 312-322; it reads DWETEEEDKGE. Disordered regions lie at residues 312-361 and 382-401; these read DWET…ASSL and GKHP…ADGI. A compositionally biased stretch (basic and acidic residues) spans 323–339; it reads EDGGVRLGAKRESKVVD. Over residues 340-356 the composition is skewed to acidic residues; that stretch reads ENGDEVMEDEEGWETDS. The span at 383 to 395 shows a compositional bias: basic residues; it reads KHPHHSRENKKAH.

The protein belongs to the REI1 family. Associates with nascent pre-60S particles that have not yet entered the translating pool, and is released from mature 60S subunits.

Its subcellular location is the cytoplasm. Pre-60S-associated factor involved in the cytoplasmic maturation of the 60S subunit. Involved in the dissociation and recycling of other late pre-60S factors before newly synthesized large ribosomal subunits enter translation. The chain is Cytoplasmic 60S subunit biogenesis factor REI1 homolog from Chaetomium thermophilum (strain DSM 1495 / CBS 144.50 / IMI 039719) (Thermochaetoides thermophila).